The primary structure comprises 1734 residues: Gag-Pol polyprotein (1734 aa).

Residue glycine 2 is the site of N-myristoyl glycine; by host attachment. The interval 107–217 is disordered; it reads PSPTAPILPS…STTSRAFPLR (111 aa). The short motif at 109–112 is the PTAP/PSAP motif element; the sequence is PTAP. An LYPX(n)L motif motif is present at residues 128–132; it reads LYPAL. The PPXY motif motif lies at 161 to 164; it reads PPPY. Serine 191 is subject to Phosphoserine; by host. The segment at 344-392 is interaction with host PIAS4; that stretch reads GRSPTNLAKVKGITQGPNESPSAFLERLKEAYRRYTPYDPEDPGQETNV. An interaction with host UBE2I region spans residues 429–434; sequence IFNKRE. 2 stretches are compositionally biased toward basic and acidic residues: residues 434 to 465 and 485 to 498; these read ETPE…EKER and RQDR…RPQL. Disordered stretches follow at residues 434–498 and 512–552; these read ETPE…RPQL and WAKD…PRIT. Residues 437 to 478 are a coiled coil; sequence EEREERVRRETEEKEERRRAEEEQKEKERDRRRHREMSKLLA. The CCHC-type zinc-finger motif lies at 501-518; the sequence is DQCAYCKEKGHWAKDCPK. A Peptidase A2 domain is found at 560-630; it reads VTFLVDTGAQ…CPYPLLGRDL (71 aa). Aspartate 565 acts as the Protease; shared with dimeric partner in catalysis. One can recognise a Reverse transcriptase domain in the interval 740-931; that stretch reads LDQGILVPCQ…KQVKYLGYLL (192 aa). 7 residues coordinate Mg(2+): aspartate 808, aspartate 882, aspartate 883, aspartate 1182, glutamate 1220, aspartate 1241, and aspartate 1311. An RNase H type-1 domain is found at 1173-1319; that stretch reads PDADHTWYTD…ADQAAREAAI (147 aa). The segment at 1386–1426 adopts an HHCC-type zinc-finger fold; sequence HRLTHLGYQKMKALLDRGESPYYMLNRDKTLQYVADSCTVC. Residues 1443–1601 form the Integrase catalytic domain; sequence RGHRPGSHWE…TPYEILYGAP (159 aa). 2 residues coordinate Mg(2+): aspartate 1454 and aspartate 1513.

The protein belongs to the retroviral Pol polyprotein family. Homohexamer; further associates as homomultimer. The virus core is composed of a lattice formed from hexagonal rings, each containing six capsid monomers. As to quaternary structure, interacts (via PPXY motif) with host NEDD4. Interacts (via PSAP motif) with host TSG101. Interacts (via LYPX(n)L motif) with host PDCD6IP. In terms of assembly, the reverse transcriptase is a monomer (Potential). Interacts (via RNase domains) with host release factor ETF1; this interaction is essential for translational readthrough of amber codon between viral gag and pol genes, as well as for viral replication. Homodimer. The cofactor is Mg(2+). Post-translationally, ubiquitinated by ITCH. Gag can recruit the ubiquitin ligase Itch in an L domain-independent manner to facilitate virus release via a mechanism that involves Gag ubiquitination. Specific enzymatic cleavages by the viral protease yield mature proteins. The protease is released by autocatalytic cleavage. The polyprotein is cleaved during and after budding, this process is termed maturation. In terms of processing, sumoylated; which is required for virus replication. Post-translationally, phosphorylated on serine residues.

It localises to the virion. The protein localises to the host cell membrane. Its subcellular location is the host late endosome membrane. It is found in the host endosome. The protein resides in the host multivesicular body. It localises to the host cytoplasm. It carries out the reaction DNA(n) + a 2'-deoxyribonucleoside 5'-triphosphate = DNA(n+1) + diphosphate. The enzyme catalyses Endonucleolytic cleavage to 5'-phosphomonoester.. With respect to regulation, most efficiently inhibited by Amprenavir, which is able to block Gag-Pol processing in infected cells. Functionally, plays a role in budding and is processed by the viral protease during virion maturation outside the cell. During budding, it recruits, in a PPXY-dependent or independent manner, Nedd4-like ubiquitin ligases that conjugate ubiquitin molecules to Gag-Pol, or to Gag-Pol binding host factors. Interaction with HECT ubiquitin ligases probably link the viral protein to the host ESCRT pathway and facilitates release. In terms of biological role, targets Gag and gag-pol polyproteins to the plasma membrane via a multipartite membrane binding signal, that includes its myristoylated N-terminus. Also mediates nuclear localization of the pre-integration complex. Constituent of the pre-integration complex (PIC) which tethers the latter to mitotic chromosomes. This allows the integration of the viral genome into the host DNA. Its function is as follows. Forms the spherical core of the virion that encapsulates the genomic RNA-nucleocapsid complex. Functionally, involved in the packaging and encapsidation of two copies of the genome. Binds with high affinity to conserved UCUG elements within the packaging signal, located near the 5'-end of the genome. This binding is dependent on genome dimerization. Acts as a nucleic acid chaperone which is involved in rearrangement of nucleic acid secondary structures during gRNA retrotranscription. In terms of biological role, the aspartyl protease mediates proteolytic cleavages of Gag and Gag-Pol polyproteins during or shortly after the release of the virion from the plasma membrane. Cleavages take place as an ordered, step-wise cascade to yield mature proteins. This process is called maturation. Displays maximal activity during the budding process just prior to particle release from the cell (Potential). Cleaves the translation initiation factor eIF4G leading to the inhibition of host cap-dependent translation. RT is a multifunctional enzyme that converts the viral dimeric RNA genome into dsDNA in the cytoplasm, shortly after virus entry into the cell. This enzyme displays a DNA polymerase activity that can copy either DNA or RNA templates, and a ribonuclease H (RNase H) activity that cleaves the RNA strand of RNA-DNA heteroduplexes in a partially processive 3' to 5' endonucleasic mode. Conversion of viral genomic RNA into dsDNA requires many steps. A tRNA binds to the primer-binding site (PBS) situated at the 5' end of the viral RNA. RT uses the 3' end of the tRNA primer to perform a short round of RNA-dependent minus-strand DNA synthesis. The reading proceeds through the U5 region and ends after the repeated (R) region which is present at both ends of viral RNA. The portion of the RNA-DNA heteroduplex is digested by the RNase H, resulting in a ssDNA product attached to the tRNA primer. This ssDNA/tRNA hybridizes with the identical R region situated at the 3' end of viral RNA. This template exchange, known as minus-strand DNA strong stop transfer, can be either intra- or intermolecular. RT uses the 3' end of this newly synthesized short ssDNA to perform the RNA-dependent minus-strand DNA synthesis of the whole template. RNase H digests the RNA template except for a polypurine tract (PPT) situated at the 5' end of the genome. It is not clear if both polymerase and RNase H activities are simultaneous. RNase H probably can proceed both in a polymerase-dependent (RNA cut into small fragments by the same RT performing DNA synthesis) and a polymerase-independent mode (cleavage of remaining RNA fragments by free RTs). Secondly, RT performs DNA-directed plus-strand DNA synthesis using the PPT that has not been removed by RNase H as primers. PPT and tRNA primers are then removed by RNase H. The 3' and 5' ssDNA PBS regions hybridize to form a circular dsDNA intermediate. Strand displacement synthesis by RT to the PBS and PPT ends produces a blunt ended, linear dsDNA copy of the viral genome that includes long terminal repeats (LTRs) at both ends. Its function is as follows. Catalyzes viral DNA integration into the host chromosome, by performing a series of DNA cutting and joining reactions. This enzyme activity takes place after virion entry into a cell and reverse transcription of the RNA genome in dsDNA. The first step in the integration process is 3' processing. This step requires a complex comprising the viral genome, matrix protein and integrase. This complex is called the pre-integration complex (PIC). The integrase protein removes 2 nucleotides from each 3' end of the viral DNA, leaving recessed CA OH's at the 3' ends. In the second step that requires cell division, the PIC enters cell nucleus. In the third step, termed strand transfer, the integrase protein joins the previously processed 3' ends to the 5' ends of strands of target cellular DNA at the site of integration. The last step is viral DNA integration into host chromosome. This AKV murine leukemia virus (AKR (endogenous) murine leukemia virus) protein is Gag-Pol polyprotein (pol).